We begin with the raw amino-acid sequence, 473 residues long: Glutamate--tRNA ligase (473 aa).

The short motif at 10–20 is the 'HIGH' region element; it reads PSPTGYLHLGN. Cys-98, Cys-100, Cys-125, and His-127 together coordinate Zn(2+). A 'KMSKS' region motif is present at residues 242-246; the sequence is KLSKR. An ATP-binding site is contributed by Lys-245.

Belongs to the class-I aminoacyl-tRNA synthetase family. Glutamate--tRNA ligase type 1 subfamily. In terms of assembly, monomer. Requires Zn(2+) as cofactor.

It is found in the cytoplasm. The catalysed reaction is tRNA(Glu) + L-glutamate + ATP = L-glutamyl-tRNA(Glu) + AMP + diphosphate. Its function is as follows. Catalyzes the attachment of glutamate to tRNA(Glu) in a two-step reaction: glutamate is first activated by ATP to form Glu-AMP and then transferred to the acceptor end of tRNA(Glu). This chain is Glutamate--tRNA ligase, found in Aquifex aeolicus (strain VF5).